Here is a 469-residue protein sequence, read N- to C-terminus: tRNA-2-methylthio-N(6)-dimethylallyladenosine synthase (469 aa).

The 116-residue stretch at 27-142 (KKVYIRTFGC…LPQMLAQRAR (116 aa)) folds into the MTTase N-terminal domain. 6 residues coordinate [4Fe-4S] cluster: C36, C73, C105, C179, C183, and C186. The Radical SAM core domain maps to 165–398 (KVDGAAAFVS…QATIEDNVRR (234 aa)). The 67-residue stretch at 401 to 467 (ERRVGTVQRV…PHSLRGEPVL (67 aa)) folds into the TRAM domain.

The protein belongs to the methylthiotransferase family. MiaB subfamily. In terms of assembly, monomer. It depends on [4Fe-4S] cluster as a cofactor.

The protein resides in the cytoplasm. It catalyses the reaction N(6)-dimethylallyladenosine(37) in tRNA + (sulfur carrier)-SH + AH2 + 2 S-adenosyl-L-methionine = 2-methylsulfanyl-N(6)-dimethylallyladenosine(37) in tRNA + (sulfur carrier)-H + 5'-deoxyadenosine + L-methionine + A + S-adenosyl-L-homocysteine + 2 H(+). Its function is as follows. Catalyzes the methylthiolation of N6-(dimethylallyl)adenosine (i(6)A), leading to the formation of 2-methylthio-N6-(dimethylallyl)adenosine (ms(2)i(6)A) at position 37 in tRNAs that read codons beginning with uridine. In Leptothrix cholodnii (strain ATCC 51168 / LMG 8142 / SP-6) (Leptothrix discophora (strain SP-6)), this protein is tRNA-2-methylthio-N(6)-dimethylallyladenosine synthase.